A 927-amino-acid chain; its full sequence is Alpha-catenin-like protein hmp-1 (927 aa).

Coiled coils occupy residues 319-354 (TREN…RRDD) and 672-696 (QENQ…QIDI). The segment at 901-927 (RNEIETGRDSDDEELDRRHQQRINGRL) is disordered.

Belongs to the vinculin/alpha-catenin family. Component of a core catenin-cadherin complex consisting of hmr-1, hmp-1 and hmp-2; the complex localizes to adherens junctions. May interact with hmp-2. Epidermal cells.

The protein localises to the cell junction. The protein resides in the adherens junction. It is found in the cytoplasm. Its function is as follows. Required for cell migration during body enclosure and cell shape changes during body elongation. Required for proper localization of other junctional components, such as pac-1. This chain is Alpha-catenin-like protein hmp-1 (hmp-1), found in Caenorhabditis elegans.